The primary structure comprises 389 residues: Phosphopentomutase (389 aa).

Residues Asp-9, Asp-282, His-287, Asp-323, His-324, and His-335 each coordinate Mn(2+).

The protein belongs to the phosphopentomutase family. Requires Mn(2+) as cofactor.

It localises to the cytoplasm. The catalysed reaction is 2-deoxy-alpha-D-ribose 1-phosphate = 2-deoxy-D-ribose 5-phosphate. It catalyses the reaction alpha-D-ribose 1-phosphate = D-ribose 5-phosphate. It functions in the pathway carbohydrate degradation; 2-deoxy-D-ribose 1-phosphate degradation; D-glyceraldehyde 3-phosphate and acetaldehyde from 2-deoxy-alpha-D-ribose 1-phosphate: step 1/2. Isomerase that catalyzes the conversion of deoxy-ribose 1-phosphate (dRib-1-P) and ribose 1-phosphate (Rib-1-P) to deoxy-ribose 5-phosphate (dRib-5-P) and ribose 5-phosphate (Rib-5-P), respectively. The sequence is that of Phosphopentomutase from Kosmotoga olearia (strain ATCC BAA-1733 / DSM 21960 / TBF 19.5.1).